A 407-amino-acid chain; its full sequence is Carbamoyl phosphate synthase small chain (407 aa).

Positions 1–203 (MSQNESGTIA…EPCGEYEGKE (203 aa)) are CPSase. Ser-61, Gly-255, and Gly-257 together coordinate L-glutamine. The Glutamine amidotransferase type-1 domain maps to 207–405 (TVAAVDLGIK…CELMKNNSKE (199 aa)). Catalysis depends on Cys-283, which acts as the Nucleophile. Phe-284, Gln-287, Asn-325, Gly-327, and Phe-328 together coordinate L-glutamine. Residues His-378 and Glu-380 contribute to the active site.

It belongs to the CarA family. In terms of assembly, composed of two chains; the small (or glutamine) chain promotes the hydrolysis of glutamine to ammonia, which is used by the large (or ammonia) chain to synthesize carbamoyl phosphate. Tetramer of heterodimers (alpha,beta)4.

The enzyme catalyses hydrogencarbonate + L-glutamine + 2 ATP + H2O = carbamoyl phosphate + L-glutamate + 2 ADP + phosphate + 2 H(+). It carries out the reaction L-glutamine + H2O = L-glutamate + NH4(+). It participates in amino-acid biosynthesis; L-arginine biosynthesis; carbamoyl phosphate from bicarbonate: step 1/1. It functions in the pathway pyrimidine metabolism; UMP biosynthesis via de novo pathway; (S)-dihydroorotate from bicarbonate: step 1/3. Its function is as follows. Small subunit of the glutamine-dependent carbamoyl phosphate synthetase (CPSase). CPSase catalyzes the formation of carbamoyl phosphate from the ammonia moiety of glutamine, carbonate, and phosphate donated by ATP, constituting the first step of 2 biosynthetic pathways, one leading to arginine and/or urea and the other to pyrimidine nucleotides. The small subunit (glutamine amidotransferase) binds and cleaves glutamine to supply the large subunit with the substrate ammonia. This is Carbamoyl phosphate synthase small chain from Bifidobacterium longum (strain DJO10A).